Reading from the N-terminus, the 170-residue chain is uncharacterized protein (170 aa).

An N-terminal signal peptide occupies residues 1–26; it reads MLKKKWMVGLLAGCLAAGGFSYNAFA.

This is an uncharacterized protein from Bacillus subtilis (strain 168).